Reading from the N-terminus, the 572-residue chain is Mitochondrial distribution and morphology protein 34 (572 aa).

An SMP-LTD domain is found at 1-195 (MAFNFNWSPL…LPAIIHRLSL (195 aa)). Disordered regions lie at residues 212–236 (TASA…VDAL), 355–426 (GAGR…PDND), 487–507 (HGAS…GSSR), and 552–572 (ACGP…AYGH). Over residues 358–370 (RHSKAHARKRKKR) the composition is skewed to basic residues. The span at 371 to 381 (VVDLRRPKTTD) shows a compositional bias: basic and acidic residues. Over residues 387–400 (SDESSFTESTSAPS) the composition is skewed to polar residues.

Belongs to the MDM34 family. In terms of assembly, component of the ER-mitochondria encounter structure (ERMES) or MDM complex, composed of mmm1, mdm10, mdm12 and mdm34.

It is found in the mitochondrion outer membrane. Functionally, component of the ERMES/MDM complex, which serves as a molecular tether to connect the endoplasmic reticulum (ER) and mitochondria. Components of this complex are involved in the control of mitochondrial shape and protein biogenesis, and function in nonvesicular lipid trafficking between the ER and mitochondria. Mdm34 is required for the interaction of the ER-resident membrane protein mmm1 and the outer mitochondrial membrane-resident beta-barrel protein mdm10. In Aspergillus fumigatus (strain ATCC MYA-4609 / CBS 101355 / FGSC A1100 / Af293) (Neosartorya fumigata), this protein is Mitochondrial distribution and morphology protein 34.